We begin with the raw amino-acid sequence, 271 residues long: Signal recognition particle receptor subunit beta (271 aa).

Residues 37–57 (LLSVVVAVLAVLLTLVFWKLI) form a helical membrane-spanning segment. GTP-binding positions include 71–79 (GLCDSGKTL) and 92–95 (TQTS). The residue at position 112 (Ser-112) is a Phosphoserine. Gly-120 contributes to the GTP binding site. At Thr-214 the chain carries Phosphothreonine. Ala-248 provides a ligand contact to GTP.

It belongs to the SRP receptor beta subunit family. As to quaternary structure, heterodimer with SRPRA.

It is found in the endoplasmic reticulum membrane. Functionally, component of the signal recognition particle (SRP) complex receptor (SR). Ensures, in conjunction with the SRP complex, the correct targeting of the nascent secretory proteins to the endoplasmic reticulum membrane system. May mediate the membrane association of SR. In Homo sapiens (Human), this protein is Signal recognition particle receptor subunit beta (SRPRB).